The chain runs to 488 residues: Annexin A7 (488 aa).

Over residues 1 to 18 (MSYPGYPPTGYPPFPGYP) the composition is skewed to pro residues. Disordered stretches follow at residues 1–49 (MSYP…YPQV) and 71–150 (GYPG…NTES). Residues 1–143 (MSYPGYPPTG…QYPGGQPTYP (143 aa)) form a repeat-rich region region. Residues 5 to 20 (GYPPTGYPPFPGYPPA) are 3 X 5 AA tandem repeats of G-Y-P-P-X. Gly residues predominate over residues 89–102 (PGQGFGVPPGGAGF). Annexin repeat units follow at residues 185 to 256 (FDAM…ALFM), 257 to 328 (PPTY…SMCQ), 340 to 412 (QMAQ…TILQ), and 416 to 487 (NRPA…AIVG). Lysine 233 carries the N6-acetyllysine modification.

The protein belongs to the annexin family. In terms of assembly, interacts with PDCD6.

In terms of biological role, calcium/phospholipid-binding protein which promotes membrane fusion and is involved in exocytosis. The sequence is that of Annexin A7 (ANXA7) from Macaca fascicularis (Crab-eating macaque).